The sequence spans 138 residues: Transcription antitermination protein NusB (138 aa).

Belongs to the NusB family.

Involved in transcription antitermination. Required for transcription of ribosomal RNA (rRNA) genes. Binds specifically to the boxA antiterminator sequence of the ribosomal RNA (rrn) operons. The protein is Transcription antitermination protein NusB of Desulforudis audaxviator (strain MP104C).